Here is a 401-residue protein sequence, read N- to C-terminus: Exodeoxyribonuclease 7 large subunit (401 aa).

The protein belongs to the XseA family. Heterooligomer composed of large and small subunits.

It is found in the cytoplasm. The enzyme catalyses Exonucleolytic cleavage in either 5'- to 3'- or 3'- to 5'-direction to yield nucleoside 5'-phosphates.. Its function is as follows. Bidirectionally degrades single-stranded DNA into large acid-insoluble oligonucleotides, which are then degraded further into small acid-soluble oligonucleotides. This is Exodeoxyribonuclease 7 large subunit from Lachnoclostridium phytofermentans (strain ATCC 700394 / DSM 18823 / ISDg) (Clostridium phytofermentans).